A 3333-amino-acid chain; its full sequence is Laminin subunit alpha-3 (3333 aa).

The signal sequence occupies residues 1–35 (MAAAARPRGRALGPVLPPTPLLLLVLRVLPACGAT). The Laminin N-terminal domain occupies 43–298 (AGLSLHPTYF…SIKDISIGGQ (256 aa)). 2 N-linked (GlcNAc...) asparagine glycosylation sites follow: Asn142 and Asn242. The segment at 298–728 (QCVCNGHAEV…NNYYFPDLHH (431 aa)) is domain V. 29 disulfides stabilise this stretch: Cys299–Cys308, Cys301–Cys319, Cys321–Cys330, Cys333–Cys353, Cys356–Cys365, Cys358–Cys390, Cys393–Cys402, Cys405–Cys423, Cys426–Cys436, Cys428–Cys443, Cys445–Cys454, Cys457–Cys467, Cys491–Cys503, Cys493–Cys509, Cys511–Cys520, Cys523–Cys533, Cys536–Cys548, Cys538–Cys555, Cys557–Cys566, Cys569–Cys586, Cys601–Cys610, Cys613–Cys628, Cys631–Cys645, Cys633–Cys652, Cys654–Cys663, Cys666–Cys681, Cys684–Cys696, Cys686–Cys703, and Cys705–Cys714. 8 Laminin EGF-like domains span residues 299–355 (CVCN…ECEA), 356–425 (CNCH…GCIP), 426–469 (CSCD…FCLR), 491–535 (CDCN…ICQA), 536–588 (CWCS…ACDP), 590–630 (GTIN…GCSE), 631–683 (CKCH…GCQG), and 684–728 (CQCD…DLHH). The tract at residues 796 to 1265 (TEAVSGHITI…VAFYHKGALP (470 aa)) is domain IV 1 (domain IV B). 16 disulfide bridges follow: Cys1266/Cys1278, Cys1268/Cys1285, Cys1287/Cys1296, Cys1299/Cys1309, Cys1312/Cys1319, Cys1314/Cys1326, Cys1328/Cys1337, Cys1340/Cys1353, Cys1356/Cys1371, Cys1358/Cys1378, Cys1380/Cys1389, Cys1392/Cys1402, Cys1405/Cys1417, Cys1407/Cys1424, Cys1426/Cys1435, and Cys1438/Cys1453. Laminin EGF-like domains lie at 1266 to 1311 (CECH…RCKP), 1312 to 1355 (CSCG…GCEG), 1356 to 1404 (CNCS…ECVP), and 1405 to 1455 (CNCN…GCTS). Residues 1266-1465 (CECHPTGATG…CFCFGVNNQC (200 aa)) are domain III B. The region spanning 1476-1653 (VDMLGWHLET…SGRIALAVEI (178 aa)) is the Laminin IV type A domain. The interval 1654–1821 (CACPPAYAGD…DSSPAEECDD (168 aa)) is domain III A. Cystine bridges form between Cys1687-Cys1696, Cys1689-Cys1703, Cys1706-Cys1715, Cys1718-Cys1731, Cys1734-Cys1746, Cys1736-Cys1755, Cys1757-Cys1766, and Cys1769-Cys1784. Laminin EGF-like domains are found at residues 1687–1733 (CNCN…SCRA) and 1734–1786 (CPCP…SCQP). Positions 1787–1821 (CSCNSNGQLGSCHPLTGDCINQEPKDSSPAEECDD) constitute a Laminin EGF-like 15; truncated domain. Positions 1822-2389 (CDSCVMTLLN…ARDAASKVAV (568 aa)) are domain II and I. 2 coiled-coil regions span residues 1852–1941 (ASAG…KNVI) and 1987–2169 (KHLR…DELV). Residues 2278-2280 (RGD) carry the Cell attachment site motif. Residues 2322-2388 (RTQNEDFKKA…QARDAASKVA (67 aa)) adopt a coiled-coil conformation. Asn2365, Asn2502, and Asn2584 each carry an N-linked (GlcNAc...) asparagine glycan. Laminin G-like domains lie at 2390-2591 (PMRF…VEPC), 2598-2760 (SDKN…TKKC), 2767-2927 (VRSA…LGGC), 2986-3150 (ALQF…VSSC), and 3157-3330 (KGIY…LNGC). Disulfide bonds link Cys2561-Cys2591, Cys2737-Cys2760, Cys2895-Cys2927, Cys3127-Cys3150, and Cys3302-Cys3330.

In terms of assembly, laminin is a complex glycoprotein, consisting of three different polypeptide chains (alpha, beta, gamma), which are bound to each other by disulfide bonds into a cross-shaped molecule comprising one long and three short arms with globules at each end. Alpha-3 is a subunit of laminin-5 (laminin-332 or epiligrin/kalinin/nicein), laminin-6 (laminin-311 or K-laminin) and laminin-7 (laminin-321 or KS-laminin). As to expression, skin; respiratory, urinary, and digestive epithelia and in other specialized tissues with prominent secretory or protective functions. Epithelial basement membrane, and epithelial cell tongue that migrates into a wound bed. A differential and focal expression of the subunit alpha-3 is observed in the CNS.

The protein resides in the secreted. It localises to the extracellular space. It is found in the extracellular matrix. The protein localises to the basement membrane. Binding to cells via a high affinity receptor, laminin is thought to mediate the attachment, migration and organization of cells into tissues during embryonic development by interacting with other extracellular matrix components. In terms of biological role, laminin-5 is thought to be involved in (1) cell adhesion via integrin alpha-3/beta-1 in focal adhesion and integrin alpha-6/beta-4 in hemidesmosomes, (2) signal transduction via tyrosine phosphorylation of pp125-FAK and p80, (3) differentiation of keratinocytes. The polypeptide is Laminin subunit alpha-3 (LAMA3) (Homo sapiens (Human)).